The chain runs to 385 residues: Spermidine/putrescine import ATP-binding protein PotA (385 aa).

Positions 27-257 (ASFRAVSKHY…PANLFVAQFA (231 aa)) constitute an ABC transporter domain. ATP is bound at residue 59–66 (GPSGCGKT).

It belongs to the ABC transporter superfamily. Spermidine/putrescine importer (TC 3.A.1.11.1) family. In terms of assembly, the complex is composed of two ATP-binding proteins (PotA), two transmembrane proteins (PotB and PotC) and a solute-binding protein (PotD).

The protein localises to the cell inner membrane. It catalyses the reaction ATP + H2O + polyamine-[polyamine-binding protein]Side 1 = ADP + phosphate + polyamineSide 2 + [polyamine-binding protein]Side 1.. In terms of biological role, part of the ABC transporter complex PotABCD involved in spermidine/putrescine import. Responsible for energy coupling to the transport system. In Methylococcus capsulatus (strain ATCC 33009 / NCIMB 11132 / Bath), this protein is Spermidine/putrescine import ATP-binding protein PotA.